The primary structure comprises 880 residues: uncharacterized protein (880 aa).

Disordered regions lie at residues 101 to 149 (KPIP…LRSE), 191 to 224 (PETS…ISTH), 240 to 273 (TTTT…PILK), 294 to 350 (NSNS…STTS), 425 to 446 (QPDS…ESQP), 470 to 508 (STST…SSSS), 536 to 561 (MESS…NDNS), 580 to 613 (APQS…NDDE), 682 to 713 (NTNT…NINN), and 844 to 880 (NSSG…KSEI). A coiled-coil region spans residues 113–147 (ISIKEKEKEKEKEKEKEKEKEKEKEKEMKSTINLR). The segment covering 115–149 (IKEKEKEKEKEKEKEKEKEKEKEKEMKSTINLRSE) has biased composition (basic and acidic residues). Low complexity-rich tracts occupy residues 193–223 (TSTP…SIST) and 240–256 (TTTT…PSSS). Positions 257-271 (IAGITNPTSRSSSPI) are enriched in polar residues. Positions 294 to 332 (NSNSSSGGGNNNNKSISTPSSPIISRPITNKINNNNNNN) are enriched in low complexity. The segment covering 333-342 (QPQLHYNQPQ) has biased composition (polar residues). The span at 536–548 (MESSTTTTLLSEN) shows a compositional bias: low complexity. Over residues 589–613 (QPEDDPFFDFEDLSDDDDSNDNDDE) the composition is skewed to acidic residues. The segment covering 844–864 (NSSGSGNNSNDNSGSSSPSSS) has biased composition (low complexity). Residues 865–880 (KTNTLNQQSICIKSEI) show a composition bias toward polar residues.

This is an uncharacterized protein from Dictyostelium discoideum (Social amoeba).